Reading from the N-terminus, the 1010-residue chain is Retinoblastoma-related protein 1 (1010 aa).

Residues 1-23 are disordered; it reads MEGAAPPASSGSEVTGAGSGKVD. Residues 419–619 form a domain A region; sequence TPVSTAMTTA…EKGSSMYNSL (201 aa). Residues 419–861 form a pocket region; it reads TPVSTAMTTA…NEVFIPTVKP (443 aa). Residues 620 to 730 form a spacer region; the sequence is IVARPTLSAE…PAAGGELCAE (111 aa). The disordered stretch occupies residues 657–679; the sequence is LPPLPFQKQEHSPDKDEVRSPKR. A compositionally biased stretch (basic and acidic residues) spans 664 to 679; the sequence is KQEHSPDKDEVRSPKR. The domain B stretch occupies residues 731-861; the sequence is TGIGVFLSKI…NEVFIPTVKP (131 aa). The interval 868–898 is disordered; sequence SGTSPNKKNEEKCAADGPYPESPRLSRFPNL.

It belongs to the retinoblastoma protein (RB) family.

The protein resides in the nucleus. Its function is as follows. Regulator of biological processes that recruits a histone deacetylase to control gene transcription. May play a role in the entry into mitosis, negatively regulating the cell proliferation. Formation of stable complexes with geminiviridae replication-associated proteins may create a cellular environment which favors viral DNA replication. The sequence is that of Retinoblastoma-related protein 1 (RBR1) from Oryza sativa subsp. japonica (Rice).